A 430-amino-acid polypeptide reads, in one-letter code: Long-chain specific acyl-CoA dehydrogenase, mitochondrial (430 aa).

Residues 1 to 30 constitute a mitochondrion transit peptide; the sequence is MATRLLRGSLRLWGGLCAPRLPTASRCSHS. Lys42 carries the N6-acetyllysine modification. Phosphoserine is present on residues Ser54 and Ser55. 2 positions are modified to N6-acetyllysine; alternate: Lys66 and Lys81. Lys66 and Lys81 each carry N6-succinyllysine; alternate. N6-acetyllysine is present on residues Lys92 and Lys95. Position 165 is an N6-succinyllysine (Lys165). Residues 170–179 and 203–205 contribute to the FAD site; these read IAMTEPGAGS and FIT. Ser179 is a substrate binding site. Residue 227–228 coordinates substrate; the sequence is AH. An N6-succinyllysine modification is found at Lys240. Lys254 and Lys279 each carry N6-acetyllysine; alternate. Residues Lys254 and Lys279 each carry the N6-succinyllysine; alternate modification. Substrate contacts are provided by residues Tyr282 and 289–292; that span reads PQER. Glu291 serves as the catalytic Proton acceptor. Arg317 contributes to the FAD binding site. Residue Lys318 is modified to N6-acetyllysine. Lys322 bears the N6-acetyllysine; alternate mark. Position 322 is an N6-succinyllysine; alternate (Lys322). Gln328 contributes to the FAD binding site. Lys358 bears the N6-acetyllysine mark. Ser362 carries the post-translational modification Phosphoserine. 385–389 provides a ligand contact to FAD; that stretch reads QLHGG. A substrate-binding site is contributed by 412 to 413; that stretch reads GG. Residue 414-416 participates in FAD binding; the sequence is TNE.

Belongs to the acyl-CoA dehydrogenase family. In terms of assembly, homotetramer. Requires FAD as cofactor. Post-translationally, acetylation at Lys-318 and Lys-322 in proximity of the cofactor-binding sites strongly reduces catalytic activity. These sites are deacetylated by SIRT3.

The protein localises to the mitochondrion matrix. It carries out the reaction a long-chain 2,3-saturated fatty acyl-CoA + oxidized [electron-transfer flavoprotein] + H(+) = a long-chain (2E)-enoyl-CoA + reduced [electron-transfer flavoprotein]. The catalysed reaction is hexanoyl-CoA + oxidized [electron-transfer flavoprotein] + H(+) = (2E)-hexenoyl-CoA + reduced [electron-transfer flavoprotein]. It catalyses the reaction octanoyl-CoA + oxidized [electron-transfer flavoprotein] + H(+) = (2E)-octenoyl-CoA + reduced [electron-transfer flavoprotein]. The enzyme catalyses decanoyl-CoA + oxidized [electron-transfer flavoprotein] + H(+) = (2E)-decenoyl-CoA + reduced [electron-transfer flavoprotein]. It carries out the reaction dodecanoyl-CoA + oxidized [electron-transfer flavoprotein] + H(+) = (2E)-dodecenoyl-CoA + reduced [electron-transfer flavoprotein]. The catalysed reaction is tetradecanoyl-CoA + oxidized [electron-transfer flavoprotein] + H(+) = (2E)-tetradecenoyl-CoA + reduced [electron-transfer flavoprotein]. It catalyses the reaction oxidized [electron-transfer flavoprotein] + hexadecanoyl-CoA + H(+) = (2E)-hexadecenoyl-CoA + reduced [electron-transfer flavoprotein]. The enzyme catalyses octadecanoyl-CoA + oxidized [electron-transfer flavoprotein] + H(+) = (2E)-octadecenoyl-CoA + reduced [electron-transfer flavoprotein]. It carries out the reaction eicosanoyl-CoA + oxidized [electron-transfer flavoprotein] + H(+) = (2E)-eicosenoyl-CoA + reduced [electron-transfer flavoprotein]. The catalysed reaction is docosanoyl-CoA + oxidized [electron-transfer flavoprotein] + H(+) = (2E)-docosenoyl-CoA + reduced [electron-transfer flavoprotein]. It catalyses the reaction tetracosanoyl-CoA + oxidized [electron-transfer flavoprotein] + H(+) = (2E)-tetracosenoyl-CoA + reduced [electron-transfer flavoprotein]. The enzyme catalyses (5E)-tetradecenoyl-CoA + oxidized [electron-transfer flavoprotein] + H(+) = (2E,5E)-tetradecadienoyl-CoA + reduced [electron-transfer flavoprotein]. It carries out the reaction (5Z)-tetradecenoyl-CoA + oxidized [electron-transfer flavoprotein] + H(+) = (2E,5Z)-tetradecadienoyl-CoA + reduced [electron-transfer flavoprotein]. The catalysed reaction is oxidized [electron-transfer flavoprotein] + (9Z)-octadecenoyl-CoA + H(+) = (2E,9Z)-octadecadienoyl-CoA + reduced [electron-transfer flavoprotein]. Its pathway is lipid metabolism; mitochondrial fatty acid beta-oxidation. Functionally, long-chain specific acyl-CoA dehydrogenase is one of the acyl-CoA dehydrogenases that catalyze the first step of mitochondrial fatty acid beta-oxidation, an aerobic process breaking down fatty acids into acetyl-CoA and allowing the production of energy from fats. The first step of fatty acid beta-oxidation consists in the removal of one hydrogen from C-2 and C-3 of the straight-chain fatty acyl-CoA thioester, resulting in the formation of trans-2-enoyl-CoA. Among the different mitochondrial acyl-CoA dehydrogenases, long-chain specific acyl-CoA dehydrogenase can act on saturated and unsaturated acyl-CoAs with 6 to 24 carbons with a preference for 8 to 18 carbons long primary chains. In Sus scrofa (Pig), this protein is Long-chain specific acyl-CoA dehydrogenase, mitochondrial.